A 377-amino-acid chain; its full sequence is UPF0425 pyridoxal phosphate-dependent protein MTH_1914 (377 aa).

Position 207 is an N6-(pyridoxal phosphate)lysine (lysine 207).

This sequence belongs to the UPF0425 family. Requires pyridoxal 5'-phosphate as cofactor.

In Methanothermobacter thermautotrophicus (strain ATCC 29096 / DSM 1053 / JCM 10044 / NBRC 100330 / Delta H) (Methanobacterium thermoautotrophicum), this protein is UPF0425 pyridoxal phosphate-dependent protein MTH_1914.